Consider the following 993-residue polypeptide: DNA-binding protein SMUBP-2 (993 aa).

Ala-2 is modified (N-acetylalanine). Residues 213–220 (GPPGTGKT), Gln-402, Tyr-441, and Glu-570 each bind ATP. Residues 637–783 (TAFEYLDDIV…KARHITVSRR (147 aa)) are SS DNA-binding. Disordered regions lie at residues 650-723 (YTHE…GPDR), 765-815 (LRHD…EPVT), and 837-872 (RQQSSQAQTAKGQPGGDSRPQKASQKKKKKEPKGPV). Polar residues-rich tracts occupy residues 667–683 (PSTSIRKPASDQESGQE) and 703–716 (HVQSQHSSSANGSD). Residues 721 to 784 (PDRTEHFRAT…ARHITVSRRS (64 aa)) form the R3H domain. Residues 765–775 (LRHDSTGEGKA) are compositionally biased toward basic and acidic residues. Residues 784–794 (SPASSGSVAPQ) show a composition bias toward low complexity. Phosphoserine is present on residues Ser-797 and Ser-800. The span at 837–847 (RQQSSQAQTAK) shows a compositional bias: polar residues. Positions 862-866 (KKKKK) match the Nuclear localization signal motif. Residues 889 to 938 (VKADNTCSFSKCSVSTTTLGQFCMHCSHRYYLSHHLPEIHGCGEKARAHA) form an AN1-type; degenerate zinc finger. Zn(2+) is bound by residues Cys-911, Cys-914, His-928, and Cys-930. Residues 953-993 (GTKDRALDPAKRAQLQRRLDKKLGELSSQRTSRKKEKERGT) are disordered. Positions 954 to 976 (TKDRALDPAKRAQLQRRLDKKLG) are enriched in basic and acidic residues.

This sequence belongs to the DNA2/NAM7 helicase family. Homooligomer. Interacts with RUVBL1. Interacts with RUVBL2. Interacts with GTF3C1. Interacts with ABT1. Interacts with ribosomes. As to expression, in all tissues examined.

It localises to the nucleus. The protein localises to the cytoplasm. The protein resides in the cell projection. It is found in the axon. It carries out the reaction ATP + H2O = ADP + phosphate + H(+). Its function is as follows. 5' to 3' helicase that unwinds RNA and DNA duplexes in an ATP-dependent reaction. Specific to 5'-phosphorylated single-stranded guanine-rich sequences. May play a role in RNA metabolism, ribosome biogenesis or initiation of translation. May play a role in regulation of transcription. Interacts with tRNA-Tyr. The protein is DNA-binding protein SMUBP-2 (Ighmbp2) of Mus musculus (Mouse).